Reading from the N-terminus, the 88-residue chain is MGGISIWQLLIIALIVVLLFGTKKLRSLGGDLGGAVKGFKNAMSSEEDKKALEDAEAAKPVQTAQTVQSAQPTQQATEKKPESNKEQA.

A helical transmembrane segment spans residues 1–21 (MGGISIWQLLIIALIVVLLFG). The disordered stretch occupies residues 43–88 (MSSEEDKKALEDAEAAKPVQTAQTVQSAQPTQQATEKKPESNKEQA). A compositionally biased stretch (basic and acidic residues) spans 46–57 (EEDKKALEDAEA). A compositionally biased stretch (polar residues) spans 62–76 (QTAQTVQSAQPTQQA). Basic and acidic residues predominate over residues 77–88 (TEKKPESNKEQA).

The protein belongs to the TatA/E family. In terms of assembly, the Tat system comprises two distinct complexes: a TatABC complex, containing multiple copies of TatA, TatB and TatC subunits, and a separate TatA complex, containing only TatA subunits. Substrates initially bind to the TatABC complex, which probably triggers association of the separate TatA complex to form the active translocon.

It localises to the cell inner membrane. Functionally, part of the twin-arginine translocation (Tat) system that transports large folded proteins containing a characteristic twin-arginine motif in their signal peptide across membranes. TatA could form the protein-conducting channel of the Tat system. In Shewanella oneidensis (strain ATCC 700550 / JCM 31522 / CIP 106686 / LMG 19005 / NCIMB 14063 / MR-1), this protein is Sec-independent protein translocase protein TatA.